Reading from the N-terminus, the 400-residue chain is Sensor histidine kinase LnrJ (400 aa).

Residues 1–2 (MK) lie on the Extracellular side of the membrane. Residues 3–23 (ALFFTRMFTLMVSCLMYLSIV) form a helical membrane-spanning segment. Residues 24–27 (KEDN) lie on the Cytoplasmic side of the membrane. Residues 28-48 (WFGYVFIAAGAAMYAANHVLL) form a helical membrane-spanning segment. Over 49–61 (TKETNAIWFCLID) the chain is Extracellular. Residues 62 to 82 (IAIGFSFGFIFPGTGLFIIML) traverse the membrane as a helical segment. The Cytoplasmic portion of the chain corresponds to 83–101 (CPVAVAFFLRGFPKRTAWS). The helical transmembrane segment at 102 to 122 (VLCLSSILFLTVLIRTYAMFG) threads the bilayer. The Extracellular portion of the chain corresponds to 123-125 (NEF). The chain crosses the membrane as a helical span at residues 126–146 (VIDHLTSMTFVVFCGVVGKLI). Residues 147 to 400 (RKLLDAQDTA…GPVQQKESLS (254 aa)) lie on the Cytoplasmic side of the membrane. The Histidine kinase domain occupies 190 to 385 (IYERNRMARE…TVNAEFSLAN (196 aa)). H201 is subject to Phosphohistidine; by autocatalysis.

Post-translationally, autophosphorylated.

The protein localises to the cell membrane. The catalysed reaction is ATP + protein L-histidine = ADP + protein N-phospho-L-histidine.. Its function is as follows. Required for resistance to linearmycins, a family of antibiotic-specialized metabolites produced by some streptomycetes. Member of the two-component regulatory system LnrJ/LnrK, which induces expression of the LnrLMN ABC transporter in response to linearmycins and other polyenes. Acts as a specific sensor for linearmycin, either directly through binding or indirectly through membrane perturbation. Probably activates LnrK by phosphorylation. May also promote biofilm formation. This is Sensor histidine kinase LnrJ from Bacillus subtilis (strain 168).